The sequence spans 101 residues: Small ribosomal subunit protein uS14 (101 aa).

The protein belongs to the universal ribosomal protein uS14 family. Part of the 30S ribosomal subunit. Contacts proteins S3 and S10.

Its function is as follows. Binds 16S rRNA, required for the assembly of 30S particles and may also be responsible for determining the conformation of the 16S rRNA at the A site. This Chlamydia abortus (strain DSM 27085 / S26/3) (Chlamydophila abortus) protein is Small ribosomal subunit protein uS14.